Consider the following 482-residue polypeptide: Ribosomal protein S6 kinase beta-2 (482 aa).

A disordered region spans residues 1-26 (MAAVFDLDLETEEGSEGEGEPELSPA). Acidic residues predominate over residues 7-21 (LDLETEEGSEGEGEP). Residue Ser15 is modified to Phosphoserine. The region spanning 67–328 (FELLRVLGKG…AADVQRHPFF (262 aa)) is the Protein kinase domain. Residues 73–81 (LGKGGYGKV) and Lys99 contribute to the ATP site. The Proton acceptor role is filled by Asp194. Positions 329–399 (RHMNWDDLLA…VAPSVLDSIK (71 aa)) constitute an AGC-kinase C-terminal domain. Positions 407-482 (KLRSPRRLNS…SKRGRGRPGR (76 aa)) are disordered. Residues Ser417 and Ser423 each carry the phosphoserine modification. Positions 437 to 466 (PSLPEPTELPLPPLLPPPPPSTTAPLPIRP) are enriched in pro residues. The Nuclear localization signal signature appears at 471–477 (KKSKRGR). Over residues 471-482 (KKSKRGRGRPGR) the composition is skewed to basic residues. A Phosphoserine; by PKC modification is found at Ser473.

This sequence belongs to the protein kinase superfamily. AGC Ser/Thr protein kinase family. S6 kinase subfamily. In terms of processing, phosphorylated and activated by MTOR. Phosphorylation by PKC within the NLS in response to mitogenic stimuli causes cytoplasmic retention.

It is found in the cytoplasm. It localises to the nucleus. It carries out the reaction L-seryl-[protein] + ATP = O-phospho-L-seryl-[protein] + ADP + H(+). The enzyme catalyses L-threonyl-[protein] + ATP = O-phospho-L-threonyl-[protein] + ADP + H(+). Functionally, phosphorylates specifically ribosomal protein S6. Seems to act downstream of mTOR signaling in response to growth factors and nutrients to promote cell proliferation, cell growth and cell cycle progression in an alternative pathway regulated by MEAK7. This is Ribosomal protein S6 kinase beta-2 (RPS6KB2) from Homo sapiens (Human).